Here is a 71-residue protein sequence, read N- to C-terminus: Protein SOM1, mitochondrial (71 aa).

It localises to the mitochondrion inner membrane. Functionally, required for mitochondrial inner membrane peptidase function. The chain is Protein SOM1, mitochondrial (SOM1) from Kluyveromyces lactis (strain ATCC 8585 / CBS 2359 / DSM 70799 / NBRC 1267 / NRRL Y-1140 / WM37) (Yeast).